A 264-amino-acid polypeptide reads, in one-letter code: Thymidylate synthase (264 aa).

Residue R21 coordinates dUMP. Residue H51 coordinates (6R)-5,10-methylene-5,6,7,8-tetrahydrofolate. DUMP is bound at residue 126–127; sequence RR. The active-site Nucleophile is C146. Residues 166 to 169, N177, and 207 to 209 each bind dUMP; these read RSCD and HLY. D169 contacts (6R)-5,10-methylene-5,6,7,8-tetrahydrofolate. Position 263 (A263) interacts with (6R)-5,10-methylene-5,6,7,8-tetrahydrofolate.

The protein belongs to the thymidylate synthase family. Bacterial-type ThyA subfamily. Homodimer.

It is found in the cytoplasm. The enzyme catalyses dUMP + (6R)-5,10-methylene-5,6,7,8-tetrahydrofolate = 7,8-dihydrofolate + dTMP. It functions in the pathway pyrimidine metabolism; dTTP biosynthesis. In terms of biological role, catalyzes the reductive methylation of 2'-deoxyuridine-5'-monophosphate (dUMP) to 2'-deoxythymidine-5'-monophosphate (dTMP) while utilizing 5,10-methylenetetrahydrofolate (mTHF) as the methyl donor and reductant in the reaction, yielding dihydrofolate (DHF) as a by-product. This enzymatic reaction provides an intracellular de novo source of dTMP, an essential precursor for DNA biosynthesis. The sequence is that of Thymidylate synthase from Serratia proteamaculans (strain 568).